The chain runs to 61 residues: Large ribosomal subunit protein bL28 (61 aa).

It belongs to the bacterial ribosomal protein bL28 family.

The sequence is that of Large ribosomal subunit protein bL28 from Lactobacillus johnsonii (strain CNCM I-12250 / La1 / NCC 533).